A 548-amino-acid chain; its full sequence is Chaperonin GroEL (548 aa).

ATP contacts are provided by residues 30–33, K51, 87–91, G415, 479–481, and D495; these read TLGP, DGTTT, and NAA.

Belongs to the chaperonin (HSP60) family. In terms of assembly, forms a cylinder of 14 subunits composed of two heptameric rings stacked back-to-back. Interacts with the co-chaperonin GroES.

It localises to the cytoplasm. It catalyses the reaction ATP + H2O + a folded polypeptide = ADP + phosphate + an unfolded polypeptide.. Functionally, together with its co-chaperonin GroES, plays an essential role in assisting protein folding. The GroEL-GroES system forms a nano-cage that allows encapsulation of the non-native substrate proteins and provides a physical environment optimized to promote and accelerate protein folding. The protein is Chaperonin GroEL of Methylibium petroleiphilum (strain ATCC BAA-1232 / LMG 22953 / PM1).